The sequence spans 945 residues: Poly [ADP-ribose] polymerase 1 (945 aa).

The segment at 10–96 (YAIEYAKSGR…KLRQEIQHFK (87 aa)) adopts a PARP-type 1 zinc-finger fold. The Zn(2+) site is built by cysteine 22, cysteine 25, histidine 54, and cysteine 57. The segment at 117-183 (IKTEKSLSNR…DYEENFKIKA (67 aa)) adopts a PARP-type 2; degenerate zinc-finger fold. Residues 195–251 (RRSTEPATPASASPTPPEAETPVLSAEGSPESSNKRPASSEIIEIDGEGNPDENDFA) form a disordered region. Acidic residues predominate over residues 237-248 (IEIDGEGNPDEN). In terms of domain architecture, PADR1 zinc-binding spans 258–397 (KEARLMEVQK…NQMSERLYIG (140 aa)). The tract at residues 324–369 (GCPIICQTCSNGKIVYNSSCRTYVCTGYATEYSKCTYESKNPIRTP) is zinc ribbon. Residues cysteine 329, cysteine 332, cysteine 348, and cysteine 358 each contribute to the Zn(2+) site. A WGR domain is found at 464–563 (RCHVFKNEID…KHFRKMPGMF (100 aa)). The PARP alpha-helical domain occupies 586–704 (KTLLPKSVKE…DIKFAYDQIS (119 aa)). The PARP catalytic domain occupies 717 to 945 (DPVDINYQKL…RVKMHHARHL (229 aa)).

This sequence belongs to the ARTD/PARP family.

The protein resides in the nucleus. The catalysed reaction is NAD(+) + (ADP-D-ribosyl)n-acceptor = nicotinamide + (ADP-D-ribosyl)n+1-acceptor + H(+).. It catalyses the reaction L-aspartyl-[protein] + NAD(+) = 4-O-(ADP-D-ribosyl)-L-aspartyl-[protein] + nicotinamide. It carries out the reaction L-glutamyl-[protein] + NAD(+) = 5-O-(ADP-D-ribosyl)-L-glutamyl-[protein] + nicotinamide. Its activity is regulated as follows. Inhibited by N-(6-oxo-5,6-dihydrophenanthridin-2-yl)-N,N-dimethylacetamide HCl (PJ34), 1,5-dihydroxyisoquinoline (DHQ) and 3-aminobenzamide (3AB). Its function is as follows. Poly[ADP-ribose] polymerase modifies various nuclear proteins by poly(ADP-ribosyl)ation, a post-translational modification synthesized after DNA damage that appears as an obligatory step in a detection/signaling pathway leading to the reparation of DNA strand breaks and programmed cell death. Involved in protection of the genome against mutations. The sequence is that of Poly [ADP-ribose] polymerase 1 from Caenorhabditis elegans.